Consider the following 680-residue polypeptide: DNA-directed RNA polymerase subunit beta' (680 aa).

Positions 69, 71, 87, and 90 each coordinate Zn(2+). The Mg(2+) site is built by aspartate 489, aspartate 491, and aspartate 493.

This sequence belongs to the RNA polymerase beta' chain family. RpoC1 subfamily. In terms of assembly, in plastids the minimal PEP RNA polymerase catalytic core is composed of four subunits: alpha, beta, beta', and beta''. When a (nuclear-encoded) sigma factor is associated with the core the holoenzyme is formed, which can initiate transcription. The cofactor is Mg(2+). Requires Zn(2+) as cofactor.

It localises to the plastid. It is found in the chloroplast. It catalyses the reaction RNA(n) + a ribonucleoside 5'-triphosphate = RNA(n+1) + diphosphate. Functionally, DNA-dependent RNA polymerase catalyzes the transcription of DNA into RNA using the four ribonucleoside triphosphates as substrates. The protein is DNA-directed RNA polymerase subunit beta' of Nasturtium officinale (Watercress).